The sequence spans 838 residues: Transforming acidic coiled-coil-containing protein 3 (838 aa).

Position 2 is an N-acetylserine (Ser2). Ser25, Ser39, and Ser71 each carry phosphoserine. Residues 123 to 227 form a disordered region; it reads EADTDLLGDA…HGAEEECKAE (105 aa). A compositionally biased stretch (low complexity) spans 132–164; it reads ASPAFGSGSSSESGPGALADLDCSSSSQSPGSS. Phosphoserine is present on residues Ser175 and Ser177. Basic and acidic residues predominate over residues 204-227; that stretch reads DPCRTESQHKAETPHGAEEECKAE. 3 positions are modified to phosphoserine: Ser250, Ser317, and Ser402. Positions 311 to 527 are disordered; sequence GRAMTLSPQE…LELKEESFRD (217 aa). Residues 403-412 are compositionally biased toward basic and acidic residues; sequence YHLDWDKMDD. Phosphoserine is present on Ser434. The span at 492 to 503 shows a compositional bias: polar residues; sequence NSASTSLPTSCP. The necessary but not sufficient for spindle localization stretch occupies residues 522–577; it reads EESFRDPAEVLGTGAEVDYLEQFGTSSFKESALRKQSLYLKFDPLLRDSPGRPVPV. A Phosphoserine; by AURKA modification is found at Ser558. The interval 569–594 is disordered; the sequence is DSPGRPVPVATETSSMHGANETPSGR. Polar residues predominate over residues 579–591; the sequence is TETSSMHGANETP. Residues 594 to 838 form a necessary but not sufficient for spindle localization region; the sequence is RPREAKLVEF…DDLISKMEKI (245 aa). The stretch at 637-837 forms a coiled coil; it reads LQYSQKDLDA…CDDLISKMEK (201 aa).

Belongs to the TACC family. As to quaternary structure, interacts with microtubules. Interacts with CKAP5 independently of clathrin. Interacts with CKAP5 and clathrin forming the TACC3/ch-TOG/clathrin complex located at spindle inter-microtubules bridges; TACC3 (phosphorylated at Ser-558 by AURKA) and CLTC are proposed to form a composite microtubule interaction surface. Interacts with CCDC100/CEP120. The coiled coil C-terminal region interacts with AH receptor nuclear translocator protein (ARNT) and ARNT2. Interacts with GCN5L2 and PCAF.

It is found in the cytoplasm. Its subcellular location is the cytoskeleton. The protein resides in the microtubule organizing center. It localises to the centrosome. The protein localises to the spindle. It is found in the spindle pole. In terms of biological role, plays a role in the microtubule-dependent coupling of the nucleus and the centrosome. Involved in the processes that regulate centrosome-mediated interkinetic nuclear migration (INM) of neural progenitors. Acts as a component of the TACC3/ch-TOG/clathrin complex proposed to contribute to stabilization of kinetochore fibers of the mitotic spindle by acting as inter-microtubule bridge. The TACC3/ch-TOG/clathrin complex is required for the maintenance of kinetochore fiber tension. May be involved in the control of cell growth and differentiation. May contribute to cancer. This Homo sapiens (Human) protein is Transforming acidic coiled-coil-containing protein 3 (TACC3).